We begin with the raw amino-acid sequence, 467 residues long: MSLHLYNTLHRRVEPFEPLDPACPTMYVCGPTVYNYVHIGNARGPVVFGVLAALLRRRYGALRYARNITDVDDKINTAAQEQGVPISAITERFCAAYREDMKKLGVEPPDIEPEATAHMPQIIAMIEQLIERQHAYVAMEHVLFAVNSFADYGQLSRRDTEEMLAGARVEIAPYKRDPSDFVLWKPSSDQLPGWDSPWGRGRPGWHIECSAMAAAHLGETIDIHAGGIDLQFPHHENEIAQSRCAHGSSTFARVWMHNGMLNFEGAKMSKSLGNIETVHELVAKHPPEALRYALLSAHYRKPLDWSEALIAQSVRTLNRLYGTLRDLAAYPARAIIPGNIEAALDDDLNTPQALAELATLANEARIQLADTTHHAAAEVTTALTRLKAKLLGAGLALGLLQQTPEAWFSQGTNESDETHIQALIDARGAAKQARDFVRADAIRAQLAAEGIVLEDTPQGVRWMKQHT.

C29 lines the Zn(2+) pocket. The 'HIGH' region motif lies at 31-41 (PTVYNYVHIGN). Zn(2+) contacts are provided by C209, H234, and E238. Residues 267-271 (KMSKS) carry the 'KMSKS' region motif. K270 is an ATP binding site.

This sequence belongs to the class-I aminoacyl-tRNA synthetase family. Monomer. Zn(2+) is required as a cofactor.

It is found in the cytoplasm. It carries out the reaction tRNA(Cys) + L-cysteine + ATP = L-cysteinyl-tRNA(Cys) + AMP + diphosphate. The polypeptide is Cysteine--tRNA ligase (Xylella fastidiosa (strain Temecula1 / ATCC 700964)).